The sequence spans 99 residues: Goannatyrotoxin-Vere1 (99 aa).

Positions 1 to 28 (MIASMKPWPLVMVAALCILFCLGTLVDA) are cleaved as a signal peptide. Tyrosine amide is present on Y64. Positions 68–99 (SSPETLMSELIFGENSNSDHSSRSRFDDSYMW) are cleaved as a propeptide — C-terminal extension.

This sequence belongs to the NPY family. Expressed by the mandibular venom gland.

The protein localises to the secreted. Functionally, shows a potent unique triphasic action, rapid biphasic hypertension followed by prolonged hypotension. This chain is Goannatyrotoxin-Vere1, found in Varanus eremius (Rusty desert monitor).